The primary structure comprises 74 residues: MKIKGLMILASSLLILAFIHQSESASMRSLLMNNGSYEEEEQVLKYDSMGTIANSSALDSKRVIPTGPNPLHNR.

An N-terminal signal peptide occupies residues 1 to 24; it reads MKIKGLMILASSLLILAFIHQSES. N34 and N54 each carry an N-linked (GlcNAc...) asparagine glycan. 2 positions are modified to hydroxyproline: P65 and P68. P68 is a glycosylation site (O-linked (Ara...) hydroxyproline).

This sequence belongs to the CLV3/ESR signal peptide family. Post-translationally, the O-glycosylation (arabinosylation) of the hydroxyproline Pro-68 enhances binding affinity of the CLE19p peptide for its receptor. As to expression, mostly expressed in heart-shape embryos, pollen and young flower buds, and, to a lower extent, in inflorescence, leaves and roots.

The protein localises to the secreted. It localises to the extracellular space. Extracellular signal peptide that regulates cell fate. Represses root apical meristem maintenance. The chain is CLAVATA3/ESR (CLE)-related protein 19 from Arabidopsis thaliana (Mouse-ear cress).